The sequence spans 181 residues: HGPRTase-like protein 1 (181 aa).

This sequence belongs to the purine/pyrimidine phosphoribosyltransferase family. Archaeal HPRT subfamily.

In terms of biological role, may catalyze a purine salvage reaction, the substrate is unknown. This Halalkalicoccus jeotgali (strain DSM 18796 / CECT 7217 / JCM 14584 / KCTC 4019 / B3) protein is HGPRTase-like protein 1.